The chain runs to 629 residues: Dapper homolog 3 (629 aa).

S6 carries the phosphoserine modification. 2 disordered regions span residues 50 to 76 (PGMG…RRAA) and 105 to 574 (GGLE…GGLV). Residues 56-69 (EAEDEEDADEDEDA) show a composition bias toward acidic residues. A coiled-coil region spans residues 63-87 (ADEDEDAAAARRAAAALEEQLEALP). Over residues 105–150 (GGLEQESGRSSGFYEDPSSTGGPDSPPSTFCGDSGFSGSSSYGRLG) the composition is skewed to low complexity. S165 and S239 each carry phosphoserine. R258 carries the omega-N-methylarginine modification. The span at 301–311 (PAREPSLERVG) shows a compositional bias: basic and acidic residues. Residues 316–335 (SPAALSRAWASSWESEAAPE) show a composition bias toward low complexity. The span at 336–348 (PAAPPAAPSPPDS) shows a compositional bias: pro residues. A phosphoserine mark is found at S426 and S478. Over residues 525–535 (SAGRLGPLGRR) the composition is skewed to low complexity. Positions 536 to 546 (GPAGGVGGGYG) are enriched in gly residues. Positions 547–568 (ESESSASEGESPAFSSASSDSD) are enriched in low complexity. Residues 626-629 (MTTV) carry the PDZ-binding motif.

It belongs to the dapper family. As to quaternary structure, can form homodimers and heterodimers with DACT1 or DACT3. Interacts with CSNK1D, PKA catalytic subunit, PKC-type kinase, DVL1, DVL3, VANGL1, VANGL2 and CTNND1. Interacts with DVL2.

In terms of biological role, may be involved in regulation of intracellular signaling pathways during development. Specifically thought to play a role in canonical and/or non-canonical Wnt signaling pathways through interaction with DSH (Dishevelled) family proteins. The protein is Dapper homolog 3 (DACT3) of Homo sapiens (Human).